A 270-amino-acid polypeptide reads, in one-letter code: Pre-mRNA-splicing factor CWC23 (270 aa).

Residues 12 to 84 enclose the J domain; the sequence is DLYRILHIHV…EHKKEYDIWY (73 aa).

This sequence belongs to the DnaJ family. In terms of assembly, associated with the spliceosome.

The protein localises to the cytoplasm. The protein resides in the nucleus. Its function is as follows. Involved in pre-mRNA splicing. May be involved in endoplasmic reticulum-associated protein degradation (ERAD) and required for growth at low and high temperatures. In Kluyveromyces lactis (strain ATCC 8585 / CBS 2359 / DSM 70799 / NBRC 1267 / NRRL Y-1140 / WM37) (Yeast), this protein is Pre-mRNA-splicing factor CWC23 (CWC23).